Reading from the N-terminus, the 430-residue chain is MKVALPKGVFDIFPYITDAKHMWRHTSLWHRVEDVIHDVCGLYGFSEIRTPVFEKSEVFLHVGEQSDIVKKEMYTFLDKKGRSLTLRPEGTAPIVRSFIDNSMNQRDDNKFYYILPMFRYERQQSGRYRQHHQFGVEAIGVRHPLRDAEILALLWHFYSAVGLQHMQVQLNFLGGEVTRKRYDKILREYFLDHLSSLSLLSKERFNTNLLRILDSKEPEDQEIIQSAPPILDYVSDDDRKYFDEILSALDALNIAYDINPRLVRGLDYYTDLVFEAITTCRDHSYALGGGGRYDGLIASSGGPATPACGFGIGLERVIQTLLAQGNFTPLSSHKLRLIPVESQADSFCFVWAQHLRSLGIPTEVDWTHKKLKNALKIADAEKATFVCPVGERELVSEQLTVKNMSLRQEFSGSKQEVEQRLLYEIQNTSL.

This sequence belongs to the class-II aminoacyl-tRNA synthetase family. In terms of assembly, homodimer.

The protein localises to the cytoplasm. The catalysed reaction is tRNA(His) + L-histidine + ATP = L-histidyl-tRNA(His) + AMP + diphosphate + H(+). The polypeptide is Histidine--tRNA ligase (Chlamydia abortus (strain DSM 27085 / S26/3) (Chlamydophila abortus)).